A 657-amino-acid polypeptide reads, in one-letter code: Broad substrate specificity ATP-binding cassette transporter ABCG2 (657 aa).

Residues 1–24 form a disordered region; sequence MSSSNDHVLVPMSQRNNNGLPRTN. Residues 1-393 lie on the Cytoplasmic side of the membrane; the sequence is MSSSNDHVLV…SFKNLLGNPQ (393 aa). Positions 13 to 24 are enriched in polar residues; the sequence is SQRNNNGLPRTN. The 238-residue stretch at 48–285 folds into the ABC transporter domain; the sequence is VKSGFLVRKT…FASAGYHCEP (238 aa). ATP contacts are provided by residues 79-86, 183-189, Glu-210, and His-242; these read GPTGGGKS and RGISGGE. Positions 389–653 constitute an ABC transmembrane type-2 domain; it reads LGNPQASVAQ…TIAYLKLLFL (265 aa). Residues 394 to 414 form a helical membrane-spanning segment; it reads ASVAQLIVTVILGLIIGAIYF. Topologically, residues 415-428 are extracellular; the sequence is DLKYDAAGMQNRAG. The chain crosses the membrane as a helical span at residues 429–449; it reads VLFFLTTNQCFSSVSAVELFV. The Cytoplasmic portion of the chain corresponds to 450 to 477; it reads VEKKLFIHEYISGYYRVSSYFFGKVMSD. A helical transmembrane segment spans residues 478-498; the sequence is LLPMRFLPSVIFTCVLYFMLG. Over 499–506 the chain is Extracellular; the sequence is LKKTVDAF. The chain crosses the membrane as a helical span at residues 507-527; sequence FIMMFTLIMVAYTASSMALAI. Residues 528–535 are Cytoplasmic-facing; that stretch reads ATGQSVVS. A helical transmembrane segment spans residues 536–556; the sequence is VATLLMTIAFVFMMLFSGLLV. Topologically, residues 557–632 are extracellular; it reads NLRTIGPWLS…LSPWGLWKNH (76 aa). An intrachain disulfide couples Cys-592 to Cys-610. Residues Asn-596 and Asn-600 are each glycosylated (N-linked (GlcNAc...) asparagine). The chain crosses the membrane as a helical span at residues 633–653; the sequence is VALACMIIIFLTIAYLKLLFL. Topologically, residues 654-657 are cytoplasmic; sequence KKYS.

Belongs to the ABC transporter superfamily. ABCG family. Eye pigment precursor importer (TC 3.A.1.204) subfamily. As to quaternary structure, homodimer; disulfide-linked. The minimal functional unit is a homodimer, but the major oligomeric form in plasma membrane is a homotetramer with possibility of higher order oligomerization up to homododecamers. In terms of processing, N-glycosylated. Glycosylation-deficient ABCG2 is normally expressed and functional. Post-translationally, phosphorylated. Phosphorylation may regulate the localization to the plasma membrane, the homooligomerization and therefore, the activity of the transporter. As to expression, highly expressed in kidney. Lower expression in liver, colon, heart, spleen, and placenta. Expressed in mammary gland. Expressed in intestinal villi and renal proximal tubules, hepatic bile canalicular membranes, and placental labyrinth cells (at protein level).

It localises to the cell membrane. The protein resides in the apical cell membrane. The protein localises to the mitochondrion membrane. The catalysed reaction is ATP + H2O + xenobioticSide 1 = ADP + phosphate + xenobioticSide 2.. The enzyme catalyses riboflavin(in) + ATP + H2O = riboflavin(out) + ADP + phosphate + H(+). It carries out the reaction pheophorbide a(in) + ATP + H2O = pheophorbide a(out) + ADP + phosphate + H(+). It catalyses the reaction urate(in) + ATP + H2O = urate(out) + ADP + phosphate + H(+). The catalysed reaction is indoxyl sulfate(in) + ATP + H2O = indoxyl sulfate(out) + ADP + phosphate + H(+). The enzyme catalyses sphing-4-enine 1-phosphate(in) + ATP + H2O = sphing-4-enine 1-phosphate(out) + ADP + phosphate + H(+). It carries out the reaction estrone 3-sulfate(in) + ATP + H2O = estrone 3-sulfate(out) + ADP + phosphate + H(+). It catalyses the reaction dehydroepiandrosterone 3-sulfate(in) + ATP + H2O = dehydroepiandrosterone 3-sulfate(out) + ADP + phosphate + H(+). The catalysed reaction is 4-methylumbelliferone sulfate(in) + ATP + H2O = 4-methylumbelliferone sulfate(out) + ADP + phosphate + H(+). The enzyme catalyses 5,7-dimethyl-2-methylamino-4-(3-pyridylmethyl)-1,3-benzothiazol-6-yl beta-D-glucuronate(in) + ATP + H2O = 5,7-dimethyl-2-methylamino-4-(3-pyridylmethyl)-1,3-benzothiazol-6-yl beta-D-glucuronate(out) + ADP + phosphate + H(+). It carries out the reaction 4-methylumbelliferone beta-D-glucuronate(in) + ATP + H2O = 4-methylumbelliferone beta-D-glucuronate(out) + ADP + phosphate + H(+). It catalyses the reaction 5,7-dimethyl-2-methylamino-4-(3-pyridylmethyl)-1,3-benzothiazol-6-yl sulfate(in) + ATP + H2O = 5,7-dimethyl-2-methylamino-4-(3-pyridylmethyl)-1,3-benzothiazol-6-yl sulfate(out) + ADP + phosphate + H(+). The catalysed reaction is 17beta-estradiol 17-O-(beta-D-glucuronate)(in) + ATP + H2O = 17beta-estradiol 17-O-(beta-D-glucuronate)(out) + ADP + phosphate + H(+). The enzyme catalyses methotrexate(in) + ATP + H2O = methotrexate(out) + ADP + phosphate + H(+). It carries out the reaction itaconate(in) + ATP + H2O = itaconate(out) + ADP + phosphate + H(+). Its activity is regulated as follows. Specifically inhibited by the fungal toxin fumitremorgin C and Ko143. Its function is as follows. Broad substrate specificity ATP-dependent transporter of the ATP-binding cassette (ABC) family that actively extrudes a wide variety of physiological compounds, dietary toxins and xenobiotics from cells. Involved in porphyrin homeostasis, mediating the export of protoporphyrin IX (PPIX) from both mitochondria to cytosol and cytosol to extracellular space, it also functions in the cellular export of heme. Also mediates the efflux of sphingosine-1-P from cells. Acts as a urate exporter functioning in both renal and extrarenal urate excretion. In kidney, it also functions as a physiological exporter of the uremic toxin indoxyl sulfate. Also involved in the excretion of steroids like estrone 3-sulfate/E1S, 3beta-sulfooxy-androst-5-en-17-one/DHEAS, and other sulfate conjugates. Mediates the secretion of the riboflavin and biotin vitamins into milk. Extrudes pheophorbide a, a phototoxic porphyrin catabolite of chlorophyll, reducing its bioavailability. Plays an important role in the exclusion of xenobiotics from the brain. It confers to cells a resistance to multiple drugs and other xenobiotics including mitoxantrone, pheophorbide, camptothecin, methotrexate, azidothymidine, and the anthracyclines daunorubicin and doxorubicin, through the control of their efflux. In placenta, it limits the penetration of drugs from the maternal plasma into the fetus. May play a role in early stem cell self-renewal by blocking differentiation. In inflammatory macrophages, exports itaconate from the cytosol to the extracellular compartment and limits the activation of TFEB-dependent lysosome biogenesis involved in antibacterial innate immune response. This Mus musculus (Mouse) protein is Broad substrate specificity ATP-binding cassette transporter ABCG2 (Abcg2).